The primary structure comprises 237 residues: ATP synthase subunit a (237 aa).

6 helical membrane-spanning segments follow: residues 18 to 38 (STLWMAIGVLMIALLMVVGTL), 77 to 97 (IFTLFLFILFSNFLGLIPMAF), 103 to 123 (IAVTGVMAMGVFIGVTALGFM), 132 to 152 (LFWVSAAPLPLRPILAVIEVI), 185 to 205 (LILFSFVGVIVTPLSVLAIVA), and 209 to 229 (LEILVAFVQAYVFTILTCVYL).

Belongs to the ATPase A chain family. F-type ATPases have 2 components, CF(1) - the catalytic core - and CF(0) - the membrane proton channel. CF(1) has five subunits: alpha(3), beta(3), gamma(1), delta(1), epsilon(1). CF(0) has three main subunits: a(1), b(2) and c(9-12). The alpha and beta chains form an alternating ring which encloses part of the gamma chain. CF(1) is attached to CF(0) by a central stalk formed by the gamma and epsilon chains, while a peripheral stalk is formed by the delta and b chains.

The protein resides in the cellular chromatophore membrane. Key component of the proton channel; it plays a direct role in the translocation of protons across the membrane. The sequence is that of ATP synthase subunit a from Rhodobacter capsulatus (Rhodopseudomonas capsulata).